A 316-amino-acid chain; its full sequence is 2-phospho-L-lactate guanylyltransferase (316 aa).

Over residues 72 to 85 (TGVSTEAVSTSTST) the composition is skewed to low complexity. Disordered stretches follow at residues 72–107 (TGVS…PTHT) and 119–138 (LRDD…DGDK). Over residues 92 to 107 (HNAASDNYVSQSPTHT) the composition is skewed to polar residues.

It belongs to the CofC family. As to quaternary structure, homodimer.

It catalyses the reaction (2S)-2-phospholactate + GTP + H(+) = (2S)-lactyl-2-diphospho-5'-guanosine + diphosphate. It participates in cofactor biosynthesis; coenzyme F420 biosynthesis. Guanylyltransferase that catalyzes the activation of (2S)-2-phospholactate (2-PL) as (2S)-lactyl-2-diphospho-5'-guanosine, via the condensation of 2-PL with GTP. It is involved in the biosynthesis of coenzyme F420, a hydride carrier cofactor. The polypeptide is 2-phospho-L-lactate guanylyltransferase (Haloquadratum walsbyi (strain DSM 16790 / HBSQ001)).